Consider the following 241-residue polypeptide: Uridylate kinase (241 aa).

12 to 15 (KLSG) is an ATP binding site. The tract at residues 20–25 (GDKGTG) is involved in allosteric activation by GTP. Gly54 contributes to the UMP binding site. ATP contacts are provided by Gly55 and Arg59. UMP contacts are provided by residues Asp74 and 135–142 (TGSPYFST). ATP contacts are provided by Asn163, Tyr169, and Asp172.

It belongs to the UMP kinase family. As to quaternary structure, homohexamer.

The protein resides in the cytoplasm. It carries out the reaction UMP + ATP = UDP + ADP. It functions in the pathway pyrimidine metabolism; CTP biosynthesis via de novo pathway; UDP from UMP (UMPK route): step 1/1. Its activity is regulated as follows. Allosterically activated by GTP. Inhibited by UTP. In terms of biological role, catalyzes the reversible phosphorylation of UMP to UDP. The chain is Uridylate kinase from Pediococcus pentosaceus (strain ATCC 25745 / CCUG 21536 / LMG 10740 / 183-1w).